A 629-amino-acid chain; its full sequence is Extracellular metalloproteinase 10 (629 aa).

A signal peptide spans 1–19 (MHGLLLAAGLLSLPLYTIA). Positions 20–240 (HTQPSGALSR…VHNVVDYVAH (221 aa)) are excised as a propeptide. N-linked (GlcNAc...) asparagine glycosylation is found at asparagine 281 and asparagine 331. Histidine 424 contributes to the Zn(2+) binding site. The active site involves glutamate 425. Histidine 428 contributes to the Zn(2+) binding site. Residues asparagine 469 and asparagine 617 are each glycosylated (N-linked (GlcNAc...) asparagine).

It belongs to the peptidase M36 family. Zn(2+) is required as a cofactor.

It is found in the secreted. Its function is as follows. Secreted metalloproteinase that allows assimilation of proteinaceous substrates and probably acts as a virulence factor. In Coccidioides posadasii (strain C735) (Valley fever fungus), this protein is Extracellular metalloproteinase 10 (MEP10).